Consider the following 114-residue polypeptide: MVRIKRGNIARKRHKKILKLAKGFRGSHSKLFRIANQQVMKALRYGYHGRKRRKREFRSLWITRINAAVRIEGTNYSCFINSLKRQHIALNRKMLAQLAVSDQNAFKQLTKITH.

It belongs to the bacterial ribosomal protein bL20 family.

The protein localises to the plastid. It localises to the chloroplast. In terms of biological role, binds directly to 23S ribosomal RNA and is necessary for the in vitro assembly process of the 50S ribosomal subunit. It is not involved in the protein synthesizing functions of that subunit. This Guillardia theta (Cryptophyte) protein is Large ribosomal subunit protein bL20c (rpl20).